A 118-amino-acid polypeptide reads, in one-letter code: Large ribosomal subunit protein bL20 (118 aa).

It belongs to the bacterial ribosomal protein bL20 family.

Its function is as follows. Binds directly to 23S ribosomal RNA and is necessary for the in vitro assembly process of the 50S ribosomal subunit. It is not involved in the protein synthesizing functions of that subunit. The polypeptide is Large ribosomal subunit protein bL20 (rplT) (Aquifex aeolicus (strain VF5)).